The following is a 346-amino-acid chain: Syntaxin UFE1 (346 aa).

Residues Met1 to Thr324 lie on the Cytoplasmic side of the membrane. Residues Leu255–Ala317 form the t-SNARE coiled-coil homology domain. The helical; Anchor for type IV membrane protein transmembrane segment at Ala325–Leu342 threads the bilayer. The Lumenal portion of the chain corresponds to Asp343–Gly346.

This sequence belongs to the syntaxin family. Component of a SNARE complex consisting of UFE1, USE1, SEC20 and SEC22 or YKT6.

The protein localises to the endoplasmic reticulum membrane. Its function is as follows. Syntaxin required for targeting and fusion of Golgi-derived retrograde transport vesicles with the ER. This chain is Syntaxin UFE1 (UFE1), found in Saccharomyces cerevisiae (strain ATCC 204508 / S288c) (Baker's yeast).